Reading from the N-terminus, the 420-residue chain is MNIFNNNLHETDKDIDEIIKHEKIRQSSVIELIASENFISPAVLEAQGSILTNKYAEGYPSKRFYNGCEEVDKAENLAIERAKKLFNCKYANVQPHSGSQANQAVYLALLQPGDTILGMSLDSGGHLTHGAAPNISGKWFNAVSYSLNKETYLIDYNEIERLADLHKPKLLIAGFSAYPRNIDFAKFREIADKVGAYFMADIAHIAGLVATGEHQSPLAFAHIVTSTTHKTLRGPRGGLILSNDEEIGKKINSALFPGLQGGPLMHVIAAKAVAFQEALQPKYKSYIQQVISNAEALARILQERGYDILTGGTDNHIVLVDLRKDGITGKLAANSLDRAGITCNKNTIPFDKTSPFITSGIRLGTPACTTRGFKEKDFVLVAHMIADILDGCKNNEDNSKAEQKVLTEVTQLIKLFPFYG.

(6S)-5,6,7,8-tetrahydrofolate is bound by residues Leu-121 and 125-127 (GHL). N6-(pyridoxal phosphate)lysine is present on Lys-230. Residues Glu-246 and 354 to 356 (SPF) contribute to the (6S)-5,6,7,8-tetrahydrofolate site.

This sequence belongs to the SHMT family. Homodimer. It depends on pyridoxal 5'-phosphate as a cofactor.

The protein resides in the cytoplasm. It carries out the reaction (6R)-5,10-methylene-5,6,7,8-tetrahydrofolate + glycine + H2O = (6S)-5,6,7,8-tetrahydrofolate + L-serine. The protein operates within one-carbon metabolism; tetrahydrofolate interconversion. Its pathway is amino-acid biosynthesis; glycine biosynthesis; glycine from L-serine: step 1/1. Its function is as follows. Catalyzes the reversible interconversion of serine and glycine with tetrahydrofolate (THF) serving as the one-carbon carrier. This reaction serves as the major source of one-carbon groups required for the biosynthesis of purines, thymidylate, methionine, and other important biomolecules. Also exhibits THF-independent aldolase activity toward beta-hydroxyamino acids, producing glycine and aldehydes, via a retro-aldol mechanism. In Rickettsia canadensis (strain McKiel), this protein is Serine hydroxymethyltransferase.